A 214-amino-acid chain; its full sequence is Cytochrome b (214 aa).

4 helical membrane passes run 31–51, 75–96, 111–131, and 176–196; these read FGSM…FLAI, WTMQ…YIHI, WLSG…GYVL, and FFAL…AHIM. Histidine 81 and histidine 95 together coordinate heme b. Residues histidine 180 and histidine 194 each contribute to the heme b site. Residue histidine 199 coordinates a ubiquinone.

This sequence belongs to the cytochrome b family. As to quaternary structure, the cytochrome bc1 complex contains 3 respiratory subunits (MT-CYB, CYC1 and UQCRFS1), 2 core proteins (UQCRC1 and UQCRC2) and probably 6 low-molecular weight proteins. Heme b serves as cofactor.

It localises to the mitochondrion inner membrane. Functionally, component of the ubiquinol-cytochrome c reductase complex (complex III or cytochrome b-c1 complex) that is part of the mitochondrial respiratory chain. The b-c1 complex mediates electron transfer from ubiquinol to cytochrome c. Contributes to the generation of a proton gradient across the mitochondrial membrane that is then used for ATP synthesis. The protein is Cytochrome b (MT-CYB) of Elapsoidea semiannulata (Angolan garter snake).